Reading from the N-terminus, the 138-residue chain is Putative pre-16S rRNA nuclease (138 aa).

The protein belongs to the YqgF nuclease family.

It is found in the cytoplasm. Could be a nuclease involved in processing of the 5'-end of pre-16S rRNA. This is Putative pre-16S rRNA nuclease from Citrobacter koseri (strain ATCC BAA-895 / CDC 4225-83 / SGSC4696).